A 186-amino-acid polypeptide reads, in one-letter code: TATA-box-binding protein 2 (186 aa).

2 repeat units span residues 10-86 (IQNV…FDKL) and 101-179 (VQNI…VERI). Residues Lys-53 and Lys-63 each participate in a glycyl lysine isopeptide (Lys-Gly) (interchain with G-Cter in SAMP2) cross-link.

This sequence belongs to the TBP family.

General factor that plays a role in the activation of archaeal genes transcribed by RNA polymerase. Binds specifically to the TATA box promoter element which lies close to the position of transcription initiation. This chain is TATA-box-binding protein 2 (tbp2), found in Haloferax volcanii (strain ATCC 29605 / DSM 3757 / JCM 8879 / NBRC 14742 / NCIMB 2012 / VKM B-1768 / DS2) (Halobacterium volcanii).